Consider the following 75-residue polypeptide: DNA-directed RNA polymerase subunit omega (75 aa).

Belongs to the RNA polymerase subunit omega family. As to quaternary structure, in cyanobacteria the RNAP catalytic core is composed of 2 alpha, 1 beta, 1 beta', 1 gamma and 1 omega subunit. When a sigma factor is associated with the core the holoenzyme is formed, which can initiate transcription.

It carries out the reaction RNA(n) + a ribonucleoside 5'-triphosphate = RNA(n+1) + diphosphate. Functionally, promotes RNA polymerase assembly. Latches the N- and C-terminal regions of the beta' subunit thereby facilitating its interaction with the beta and alpha subunits. The polypeptide is DNA-directed RNA polymerase subunit omega (Picosynechococcus sp. (strain ATCC 27264 / PCC 7002 / PR-6) (Agmenellum quadruplicatum)).